The sequence spans 511 residues: MRIIPRTMSTQHPDNAKVPEWAKSEVIEGEDEVKEAFLAYSMYGVHEVMWDAEGKDVDTHVVRKLLSNYPDYFREHILGKDVFLTYRLPNPKVEGADRKVFAETMESIPITYDLAEKFYGNGITVPVFEVILPMTTSNLEIISVARYYEKAVANEDELELYDGVKVKDLVGEIYPKVIEVIPLVEDRDSLQNIDNIVEGYYKVIKPKYMRVFLARSDPAMNYGMITAVLSVKIALSELYKLSESLNFEIYPIIGVGSLPFRGHLSPENYEKVLEEYKGVYTYTIQSAFKYDYDYDKVKSAISSINNSRIGPAKILEKYEEDVLRKITILYTERYQPIIENLANAINDVSVLLPRRRARKLHIGLFGYSRSAGKVSLPRAISFVGSLYSIGIPPELIGISSLSNLDEKEWDIFKQNYVNFKHDLQTAARFFNWESFELIKDIWKISEDTIAKIKEDIDYAESVIGIKLGGIDYDSRKHILMSSLFLLSFKEKILQESKKYLYEMALIRRSLG.

Belongs to the PEPCase type 2 family. Homotetramer. The cofactor is Mg(2+).

It catalyses the reaction oxaloacetate + phosphate = phosphoenolpyruvate + hydrogencarbonate. Catalyzes the irreversible beta-carboxylation of phosphoenolpyruvate (PEP) to form oxaloacetate (OAA), a four-carbon dicarboxylic acid source for the tricarboxylic acid cycle. The chain is Phosphoenolpyruvate carboxylase from Saccharolobus islandicus (strain Y.N.15.51 / Yellowstone #2) (Sulfolobus islandicus).